A 393-amino-acid polypeptide reads, in one-letter code: High mobility group protein DSP1 (393 aa).

The interval 153 to 179 (QMQQQQQQQNVINSASPMSRVKADAKP) is disordered. DNA-binding regions (HMG box) lie at residues 179–249 (PRGR…QNYV) and 271–339 (PKRS…TEYK). Residues 364–374 (LLAAAAQQQHQ) are compositionally biased toward low complexity. Residues 364 to 393 (LLAAAAQQQHQQLEEQHDDDDGDGDDDENQ) form a disordered region. Residues 379 to 393 (QHDDDDGDGDDDENQ) show a composition bias toward acidic residues.

The protein belongs to the HMGB family.

The protein resides in the nucleus. Its subcellular location is the chromosome. In terms of biological role, binds preferentially single-stranded DNA and unwinds double-stranded DNA. This is High mobility group protein DSP1 (Dsp1) from Drosophila melanogaster (Fruit fly).